A 354-amino-acid chain; its full sequence is DNA integrity scanning protein DisA (354 aa).

The DAC domain maps to 6–144; it reads GIGIKNVLKI…GDIKYVLRES (139 aa). ATP contacts are provided by residues glycine 73, leucine 91, and 104-108; that span reads TRHRT.

This sequence belongs to the DisA family. As to quaternary structure, homooctamer. The cofactor is Mg(2+).

The enzyme catalyses 2 ATP = 3',3'-c-di-AMP + 2 diphosphate. Participates in a DNA-damage check-point that is active prior to asymmetric division when DNA is damaged. DisA forms globular foci that rapidly scan along the chromosomes during sporulation, searching for lesions. When a lesion is present, DisA pauses at the lesion site. This triggers a cellular response that culminates in a temporary block in sporulation initiation. Its function is as follows. Also has diadenylate cyclase activity, catalyzing the condensation of 2 ATP molecules into cyclic di-AMP (c-di-AMP). c-di-AMP acts as a signaling molecule that couples DNA integrity with progression of sporulation. The rise in c-di-AMP level generated by DisA while scanning the chromosome, operates as a positive signal that advances sporulation; upon encountering a lesion, the DisA focus arrests at the damaged site and halts c-di-AMP synthesis. This is DNA integrity scanning protein DisA from Clostridium beijerinckii (strain ATCC 51743 / NCIMB 8052) (Clostridium acetobutylicum).